A 242-amino-acid polypeptide reads, in one-letter code: 4-hydroxy-tetrahydrodipicolinate reductase (242 aa).

Residues 8-13 (GAKGRM), 75-77 (GTT), and 99-102 (ATNM) contribute to the NAD(+) site. The Proton donor/acceptor role is filled by H131. A (S)-2,3,4,5-tetrahydrodipicolinate-binding site is contributed by H132. Catalysis depends on K135, which acts as the Proton donor. 141–142 (GT) is a binding site for (S)-2,3,4,5-tetrahydrodipicolinate.

It belongs to the DapB family.

The protein localises to the cytoplasm. The catalysed reaction is (S)-2,3,4,5-tetrahydrodipicolinate + NAD(+) + H2O = (2S,4S)-4-hydroxy-2,3,4,5-tetrahydrodipicolinate + NADH + H(+). The enzyme catalyses (S)-2,3,4,5-tetrahydrodipicolinate + NADP(+) + H2O = (2S,4S)-4-hydroxy-2,3,4,5-tetrahydrodipicolinate + NADPH + H(+). The protein operates within amino-acid biosynthesis; L-lysine biosynthesis via DAP pathway; (S)-tetrahydrodipicolinate from L-aspartate: step 4/4. Catalyzes the conversion of 4-hydroxy-tetrahydrodipicolinate (HTPA) to tetrahydrodipicolinate. In Campylobacter jejuni subsp. jejuni serotype O:6 (strain 81116 / NCTC 11828), this protein is 4-hydroxy-tetrahydrodipicolinate reductase.